We begin with the raw amino-acid sequence, 347 residues long: Phosphoribosylformylglycinamidine cyclo-ligase (347 aa).

The protein belongs to the AIR synthase family.

Its subcellular location is the cytoplasm. It carries out the reaction 2-formamido-N(1)-(5-O-phospho-beta-D-ribosyl)acetamidine + ATP = 5-amino-1-(5-phospho-beta-D-ribosyl)imidazole + ADP + phosphate + H(+). The protein operates within purine metabolism; IMP biosynthesis via de novo pathway; 5-amino-1-(5-phospho-D-ribosyl)imidazole from N(2)-formyl-N(1)-(5-phospho-D-ribosyl)glycinamide: step 2/2. The protein is Phosphoribosylformylglycinamidine cyclo-ligase of Alcanivorax borkumensis (strain ATCC 700651 / DSM 11573 / NCIMB 13689 / SK2).